We begin with the raw amino-acid sequence, 116 residues long: MRHRKAYRKLSKPTPQRKALLKALLISLFKHGKIVTTLPRAKEVTRIAEKLLTIAKEDSVHHRRLVYAWLQDRELVRKVFVDIAPKYKDRNGGYTRILKLGMRRGDAAEQAVIELV.

This sequence belongs to the bacterial ribosomal protein bL17 family. In terms of assembly, part of the 50S ribosomal subunit. Contacts protein L32.

This chain is Large ribosomal subunit protein bL17, found in Dictyoglomus thermophilum (strain ATCC 35947 / DSM 3960 / H-6-12).